The sequence spans 591 residues: L-fucose isomerase (591 aa).

Active-site proton acceptor residues include E337 and D361. Positions 337, 361, and 528 each coordinate Mn(2+).

This sequence belongs to the L-fucose isomerase family. In terms of assembly, homohexamer. Mn(2+) is required as a cofactor.

The protein localises to the cytoplasm. It catalyses the reaction L-fucose = L-fuculose. It functions in the pathway carbohydrate degradation; L-fucose degradation; L-lactaldehyde and glycerone phosphate from L-fucose: step 1/3. Converts the aldose L-fucose into the corresponding ketose L-fuculose. The protein is L-fucose isomerase of Escherichia coli (strain ATCC 8739 / DSM 1576 / NBRC 3972 / NCIMB 8545 / WDCM 00012 / Crooks).